A 259-amino-acid polypeptide reads, in one-letter code: Thiazole synthase (259 aa).

Lys102 serves as the catalytic Schiff-base intermediate with DXP. Residues Gly163, 189-190 (AG), and 211-212 (NT) contribute to the 1-deoxy-D-xylulose 5-phosphate site.

This sequence belongs to the ThiG family. In terms of assembly, homotetramer. Forms heterodimers with either ThiH or ThiS.

The protein localises to the cytoplasm. The catalysed reaction is [ThiS sulfur-carrier protein]-C-terminal-Gly-aminoethanethioate + 2-iminoacetate + 1-deoxy-D-xylulose 5-phosphate = [ThiS sulfur-carrier protein]-C-terminal Gly-Gly + 2-[(2R,5Z)-2-carboxy-4-methylthiazol-5(2H)-ylidene]ethyl phosphate + 2 H2O + H(+). Its pathway is cofactor biosynthesis; thiamine diphosphate biosynthesis. Catalyzes the rearrangement of 1-deoxy-D-xylulose 5-phosphate (DXP) to produce the thiazole phosphate moiety of thiamine. Sulfur is provided by the thiocarboxylate moiety of the carrier protein ThiS. In vitro, sulfur can be provided by H(2)S. The protein is Thiazole synthase of Novosphingobium aromaticivorans (strain ATCC 700278 / DSM 12444 / CCUG 56034 / CIP 105152 / NBRC 16084 / F199).